Consider the following 131-residue polypeptide: Small ribosomal subunit protein uS8 (131 aa).

This sequence belongs to the universal ribosomal protein uS8 family. In terms of assembly, part of the 30S ribosomal subunit. Contacts proteins S5 and S12.

Its function is as follows. One of the primary rRNA binding proteins, it binds directly to 16S rRNA central domain where it helps coordinate assembly of the platform of the 30S subunit. The protein is Small ribosomal subunit protein uS8 of Chlorobaculum tepidum (strain ATCC 49652 / DSM 12025 / NBRC 103806 / TLS) (Chlorobium tepidum).